We begin with the raw amino-acid sequence, 152 residues long: Protein-export protein SecB (152 aa).

It belongs to the SecB family. As to quaternary structure, homotetramer, a dimer of dimers. One homotetramer interacts with 1 SecA dimer.

Its subcellular location is the cytoplasm. Its function is as follows. One of the proteins required for the normal export of preproteins out of the cell cytoplasm. It is a molecular chaperone that binds to a subset of precursor proteins, maintaining them in a translocation-competent state. It also specifically binds to its receptor SecA. This Rickettsia akari (strain Hartford) protein is Protein-export protein SecB.